The following is a 354-amino-acid chain: Protein YGP1 (354 aa).

The N-terminal stretch at 1 to 19 is a signal peptide; it reads MKFQVVLSALLACSSAVVA. The propeptide occupies 20–37; it reads SPIENLFKYRAVKASHSK. Asparagine 40, asparagine 50, asparagine 53, asparagine 58, asparagine 61, asparagine 65, asparagine 87, asparagine 94, asparagine 100, asparagine 106, asparagine 118, asparagine 172, asparagine 239, and asparagine 286 each carry an N-linked (GlcNAc...) asparagine glycan. Positions 50–354 constitute an Asparaginase/glutaminase domain; the sequence is NSSNVTYANG…SKSALESIFP (305 aa).

It to yeast sporulation-specific protein SPS100. In terms of processing, extensively N-glycosylated.

Its subcellular location is the secreted. Its function is as follows. May be involved in cellular adaptations prior to stationary phase. The chain is Protein YGP1 (YGP1) from Saccharomyces cerevisiae (strain ATCC 204508 / S288c) (Baker's yeast).